The primary structure comprises 526 residues: Peptide chain release factor 3 (526 aa).

Residues 9–277 form the tr-type G domain; the sequence is NKRRTFAIIS…DFVEYAPGPQ (269 aa). GTP contacts are provided by residues 18–25, 86–90, and 140–143; these read SHPDAGKT, DTPGH, and NKLD.

This sequence belongs to the TRAFAC class translation factor GTPase superfamily. Classic translation factor GTPase family. PrfC subfamily.

The protein localises to the cytoplasm. Increases the formation of ribosomal termination complexes and stimulates activities of RF-1 and RF-2. It binds guanine nucleotides and has strong preference for UGA stop codons. It may interact directly with the ribosome. The stimulation of RF-1 and RF-2 is significantly reduced by GTP and GDP, but not by GMP. In Legionella pneumophila (strain Lens), this protein is Peptide chain release factor 3.